Consider the following 188-residue polypeptide: Vascular endothelial growth factor A-A (188 aa).

The N-terminal stretch at 1–23 is a signal peptide; it reads MNLVVYLIQLFLAALLHLSAVKA. 3 disulfides stabilise this stretch: cysteine 49/cysteine 91, cysteine 80/cysteine 125, and cysteine 84/cysteine 127. Asparagine 98 carries an N-linked (GlcNAc...) asparagine glycan.

Belongs to the PDGF/VEGF growth factor family. Homodimer; disulfide-linked. Isoform VEGF165 binds kdr and kdrl. Predominantly expressed in regions associated with active vascularization. From 15-16 hours post-fertilization (hpf), expressed in the anterior forebrain, the mesoderm underlying and lateral to the anterior hindbrain, the mesoderm underlying and lateral to the posterior hindbrain, and in the ventral medial portions of the somites. By 30-36 hpf, expression in the somites is decreased, while strong expression is observed in the region of the developing glomeruli and in the anterior portion of the pronephric ducts, the pharyngeal arches, and the brain. By 72 hpf, expression remains only in the pronephros region.

The protein localises to the secreted. Growth factor active in angiogenesis, vasculogenesis and endothelial cell growth. Induces endothelial cell proliferation, promotes cell migration, inhibits apoptosis, and induces permeabilization of blood vessels. Required for intersegmental vessel development in the tail during embryogenesis. Acts both upstream of kdr and tie1 to stimulate endothelial cell differentiation, and upstream of gata1 to stimulate hematopoietic cell differentiation. This Danio rerio (Zebrafish) protein is Vascular endothelial growth factor A-A (vegfaa).